The following is a 275-amino-acid chain: NADH-quinone oxidoreductase subunit E 1 (275 aa).

[2Fe-2S] cluster-binding residues include Cys-99, Cys-104, Cys-140, and Cys-144. The interval 200 to 275 (LQAPEPVEEK…DKSKPAKKPR (76 aa)) is disordered. The segment covering 206 to 221 (VEEKKSVRASKAKDEQ) has biased composition (basic and acidic residues). Residues 231–242 (AKPSTATDVTNP) show a composition bias toward polar residues. Low complexity predominate over residues 243 to 256 (TLKTPATARKAAAK). Basic and acidic residues predominate over residues 258–269 (VKIEGETVDKSK).

The protein belongs to the complex I 24 kDa subunit family. The cofactor is [2Fe-2S] cluster.

It carries out the reaction a quinone + NADH + 5 H(+)(in) = a quinol + NAD(+) + 4 H(+)(out). Its function is as follows. NDH-1 shuttles electrons from NADH, via FMN and iron-sulfur (Fe-S) centers, to quinones in the respiratory chain. The immediate electron acceptor for the enzyme in this species is believed to be ubiquinone. Couples the redox reaction to proton translocation (for every two electrons transferred, four hydrogen ions are translocated across the cytoplasmic membrane), and thus conserves the redox energy in a proton gradient. The chain is NADH-quinone oxidoreductase subunit E 1 (nuoE1) from Rhizobium meliloti (strain 1021) (Ensifer meliloti).